A 291-amino-acid chain; its full sequence is Pyridoxal 5'-phosphate synthase subunit PdxS (291 aa).

A D-ribose 5-phosphate-binding site is contributed by Asp-23. The active-site Schiff-base intermediate with D-ribose 5-phosphate is the Lys-80. Gly-152 provides a ligand contact to D-ribose 5-phosphate. D-glyceraldehyde 3-phosphate is bound at residue Arg-164. D-ribose 5-phosphate-binding positions include Gly-213 and Gly-234–Ser-235.

The protein belongs to the PdxS/SNZ family. As to quaternary structure, in the presence of PdxT, forms a dodecamer of heterodimers.

It carries out the reaction aldehydo-D-ribose 5-phosphate + D-glyceraldehyde 3-phosphate + L-glutamine = pyridoxal 5'-phosphate + L-glutamate + phosphate + 3 H2O + H(+). Its pathway is cofactor biosynthesis; pyridoxal 5'-phosphate biosynthesis. In terms of biological role, catalyzes the formation of pyridoxal 5'-phosphate from ribose 5-phosphate (RBP), glyceraldehyde 3-phosphate (G3P) and ammonia. The ammonia is provided by the PdxT subunit. Can also use ribulose 5-phosphate and dihydroxyacetone phosphate as substrates, resulting from enzyme-catalyzed isomerization of RBP and G3P, respectively. In Bifidobacterium longum (strain DJO10A), this protein is Pyridoxal 5'-phosphate synthase subunit PdxS.